A 441-amino-acid polypeptide reads, in one-letter code: Ankyrin repeat and MYND domain-containing protein 2 (441 aa).

3 ANK repeats span residues 45 to 74, 79 to 108, and 159 to 188; these read NGMT…DVNC, HGYT…ETDV, and KLAG…NPLL. The Zn(2+) site is built by Cys-320, Cys-323, Cys-332, Cys-335, Cys-341, Cys-345, His-353, and Cys-357. The segment at 320–357 adopts an MYND-type zinc-finger fold; that stretch reads CTTCGEKGASKRCSVCKMVIYCDQTCQKTHWFTHKKIC. A compositionally biased stretch (basic and acidic residues) spans 374–384; the sequence is EKRQEENHGKL. A disordered region spans residues 374–441; sequence EKRQEENHGK…APAGPQVSEE (68 aa).

In terms of assembly, interacts with the retinal-specific guanylyl cyclase GC1.

The protein resides in the cell projection. It localises to the cilium. In terms of biological role, may be involved in the trafficking of signaling proteins to the cilia. In Homo sapiens (Human), this protein is Ankyrin repeat and MYND domain-containing protein 2 (ANKMY2).